A 730-amino-acid polypeptide reads, in one-letter code: ABC transporter G family member 3 (730 aa).

A compositionally biased stretch (low complexity) spans 1 to 28 (MEEIQSQSDLYRSSSSSASSPTSRVPSS). Positions 1–100 (MEEIQSQSDL…MASPPVPEGG (100 aa)) are disordered. Residues 47–56 (DSPEWEDTPD) are compositionally biased toward acidic residues. Residues 72-91 (NDATTTPVSPSLSKMNSGSM) show a composition bias toward polar residues. A Phosphoserine modification is found at serine 93. The 243-residue stretch at 114–356 (IAWKDLTVTM…FSNAGFPCPI (243 aa)) folds into the ABC transporter domain. Position 151–158 (151–158 (GPAKSGKS)) interacts with ATP. The ABC transmembrane type-2 domain maps to 441–653 (TRVAVLTWRS…SIEGLLENEY (213 aa)). A run of 6 helical transmembrane segments spans residues 465-485 (LILY…LGHS), 495-515 (AVFV…PSLL), 532-552 (AFVF…LMSI), 575-595 (VLNF…IACI), 600-620 (YWST…AGHF), and 689-709 (MLVL…LLRF).

This sequence belongs to the ABC transporter superfamily. ABCG family. Eye pigment precursor importer (TC 3.A.1.204) subfamily.

It localises to the membrane. This chain is ABC transporter G family member 3 (ABCG3), found in Arabidopsis thaliana (Mouse-ear cress).